Consider the following 114-residue polypeptide: Cell division protein FtsB (114 aa).

The Cytoplasmic segment spans residues 1-3 (MGK). The helical transmembrane segment at 4–21 (LTLLLVVLLGWLQYSLWV) threads the bilayer. Residues 22–114 (GKNGVHDYMR…ASYPSVTASH (93 aa)) lie on the Periplasmic side of the membrane. Positions 31–62 (RVKQDVATQQANNAKLKSRNDQLFAEIDDLNG) form a coiled coil.

Belongs to the FtsB family. Part of a complex composed of FtsB, FtsL and FtsQ.

Its subcellular location is the cell inner membrane. In terms of biological role, essential cell division protein. May link together the upstream cell division proteins, which are predominantly cytoplasmic, with the downstream cell division proteins, which are predominantly periplasmic. This chain is Cell division protein FtsB, found in Edwardsiella ictaluri (strain 93-146).